The primary structure comprises 153 residues: Cytochrome c-type biogenesis protein CcmE (153 aa).

At 1-7 (MKPRHKR) the chain is on the cytoplasmic side. A helical; Signal-anchor for type II membrane protein transmembrane segment spans residues 8–28 (LAIAGGVLVAVGAIATLVLNA). At 29–153 (FQSNLVFFYS…SSQAATGDPR (125 aa)) the chain is on the periplasmic side. His-120 and Tyr-124 together coordinate heme. Residues 130 to 153 (AEALKRAKEGGQMQSSQAATGDPR) are disordered. Residues 141–153 (QMQSSQAATGDPR) show a composition bias toward polar residues.

It belongs to the CcmE/CycJ family.

Its subcellular location is the cell inner membrane. Heme chaperone required for the biogenesis of c-type cytochromes. Transiently binds heme delivered by CcmC and transfers the heme to apo-cytochromes in a process facilitated by CcmF and CcmH. In Leptothrix cholodnii (strain ATCC 51168 / LMG 8142 / SP-6) (Leptothrix discophora (strain SP-6)), this protein is Cytochrome c-type biogenesis protein CcmE.